The sequence spans 472 residues: Protein nucleotidyltransferase YdiU (472 aa).

Positions 86, 88, 89, 109, 121, 122, 172, and 179 each coordinate ATP. The active-site Proton acceptor is the D244. 2 residues coordinate Mg(2+): N245 and D254. ATP is bound at residue D254.

The protein belongs to the SELO family. Mg(2+) is required as a cofactor. Requires Mn(2+) as cofactor.

The catalysed reaction is L-seryl-[protein] + ATP = 3-O-(5'-adenylyl)-L-seryl-[protein] + diphosphate. The enzyme catalyses L-threonyl-[protein] + ATP = 3-O-(5'-adenylyl)-L-threonyl-[protein] + diphosphate. It carries out the reaction L-tyrosyl-[protein] + ATP = O-(5'-adenylyl)-L-tyrosyl-[protein] + diphosphate. It catalyses the reaction L-histidyl-[protein] + UTP = N(tele)-(5'-uridylyl)-L-histidyl-[protein] + diphosphate. The catalysed reaction is L-seryl-[protein] + UTP = O-(5'-uridylyl)-L-seryl-[protein] + diphosphate. The enzyme catalyses L-tyrosyl-[protein] + UTP = O-(5'-uridylyl)-L-tyrosyl-[protein] + diphosphate. Nucleotidyltransferase involved in the post-translational modification of proteins. It can catalyze the addition of adenosine monophosphate (AMP) or uridine monophosphate (UMP) to a protein, resulting in modifications known as AMPylation and UMPylation. The sequence is that of Protein nucleotidyltransferase YdiU from Ruegeria pomeroyi (strain ATCC 700808 / DSM 15171 / DSS-3) (Silicibacter pomeroyi).